We begin with the raw amino-acid sequence, 216 residues long: Pyrrolidone-carboxylate peptidase (216 aa).

Active-site residues include Glu80, Cys143, and His167.

It belongs to the peptidase C15 family. Homotetramer.

It is found in the cytoplasm. The enzyme catalyses Release of an N-terminal pyroglutamyl group from a polypeptide, the second amino acid generally not being Pro.. Removes 5-oxoproline from various penultimate amino acid residues except L-proline. The chain is Pyrrolidone-carboxylate peptidase (pcp) from Streptomyces coelicolor (strain ATCC BAA-471 / A3(2) / M145).